We begin with the raw amino-acid sequence, 108 residues long: UPF0060 membrane protein Nwi_1459 (108 aa).

A run of 4 helical transmembrane segments spans residues 5 to 25 (AAYVGAAIAEIAGCFAFWAWL), 31 to 51 (VWWLVPGMASLALFAYLLTLV), 61 to 81 (AAYGGIYIMASLGWLWSVEGI), and 88 to 108 (LAGALICLIGAVVILIGPHEI).

Belongs to the UPF0060 family.

The protein localises to the cell inner membrane. The polypeptide is UPF0060 membrane protein Nwi_1459 (Nitrobacter winogradskyi (strain ATCC 25391 / DSM 10237 / CIP 104748 / NCIMB 11846 / Nb-255)).